The sequence spans 457 residues: Chromosomal replication initiator protein DnaA (457 aa).

A domain I, interacts with DnaA modulators region spans residues 1-81 (MERDLSQLWQ…NNTDLVIKVQ (81 aa)). Positions 81–119 (QEGSKPAARKVVAQQEIANTPVQHSAPMPENEPQAAFRS) are domain II. Residues 120-337 (NLNQHHLFEN…GALNRVHANA (218 aa)) are domain III, AAA+ region. Residues glycine 165, glycine 167, lysine 168, and threonine 169 each coordinate ATP. Residues 338–457 (DFTGKAITID…WSNLIRTLSA (120 aa)) are domain IV, binds dsDNA.

It belongs to the DnaA family. As to quaternary structure, oligomerizes as a right-handed, spiral filament on DNA at oriC.

The protein resides in the cytoplasm. Its function is as follows. Plays an essential role in the initiation and regulation of chromosomal replication. ATP-DnaA binds to the origin of replication (oriC) to initiate formation of the DNA replication initiation complex once per cell cycle. Binds the DnaA box (a 9 base pair repeat at the origin) and separates the double-stranded (ds)DNA. Forms a right-handed helical filament on oriC DNA; dsDNA binds to the exterior of the filament while single-stranded (ss)DNA is stabiized in the filament's interior. The ATP-DnaA-oriC complex binds and stabilizes one strand of the AT-rich DNA unwinding element (DUE), permitting loading of DNA polymerase. After initiation quickly degrades to an ADP-DnaA complex that is not apt for DNA replication. Binds acidic phospholipids. This Mannheimia succiniciproducens (strain KCTC 0769BP / MBEL55E) protein is Chromosomal replication initiator protein DnaA.